The following is a 523-amino-acid chain: Probable E3 ubiquitin-protein ligase ZFP1 (523 aa).

A compositionally biased stretch (basic and acidic residues) spans Glu18–Ser28. A disordered region spans residues Glu18 to His43. A compositionally biased stretch (polar residues) spans Phe29–Gly40. The segment at Cys471–Lys512 adopts an RING-type; atypical zinc-finger fold.

The protein belongs to the RING-type zinc finger family. Interacts with DJA6.

The enzyme catalyses S-ubiquitinyl-[E2 ubiquitin-conjugating enzyme]-L-cysteine + [acceptor protein]-L-lysine = [E2 ubiquitin-conjugating enzyme]-L-cysteine + N(6)-ubiquitinyl-[acceptor protein]-L-lysine.. It participates in protein modification; protein ubiquitination. Its function is as follows. Probable E3 ubiquitin-protein ligase. The protein is Probable E3 ubiquitin-protein ligase ZFP1 of Oryza sativa subsp. japonica (Rice).